The sequence spans 134 residues: Ethylmalonyl-CoA/methylmalonyl-CoA epimerase (134 aa).

The 131-residue stretch at 4-134 (RLNHVAIAVP…NGCLVELEQV (131 aa)) folds into the VOC domain. Co(2+)-binding residues include histidine 7, histidine 79, and glutamate 130. The active-site Proton donor/acceptor is glutamate 130.

Belongs to the methylmalonyl-CoA epimerase family. Co(2+) is required as a cofactor. Mn(2+) serves as cofactor.

The catalysed reaction is (2R)-ethylmalonyl-CoA = (2S)-ethylmalonyl-CoA. The enzyme catalyses (R)-methylmalonyl-CoA = (S)-methylmalonyl-CoA. Functionally, promiscuous isomerase that catalyzes epimerization of both ethylmalonyl-CoA and methylmalonyl-CoA. Has thus a dual role in the ethylmalonyl-CoA pathway for acetyl-CoA assimilation required for R.sphaeroides growth on acetate as sole carbon source. This Cereibacter sphaeroides (strain ATCC 17023 / DSM 158 / JCM 6121 / CCUG 31486 / LMG 2827 / NBRC 12203 / NCIMB 8253 / ATH 2.4.1.) (Rhodobacter sphaeroides) protein is Ethylmalonyl-CoA/methylmalonyl-CoA epimerase.